We begin with the raw amino-acid sequence, 600 residues long: ATP-dependent lipid A-core flippase (600 aa).

5 helical membrane-spanning segments follow: residues 28 to 48 (IMAVLGLITYGAVDAAFIAFI), 80 to 100 (IMLMAPIAVILMFSLRGVANF), 182 to 202 (WKLSLCILVIGPIMGVVISVV), 267 to 287 (ISQPLIMVIGSFALAFVLYAA), and 295 to 315 (DLTAGTFAAILGAMLAMLQPI). Residues 28–327 (IMAVLGLITY…LTRVNAEFQR (300 aa)) form the ABC transmembrane type-1 domain. An ABC transporter domain is found at 359-596 (LAFDNVTFAY…AGIYANLYQM (238 aa)). 393 to 400 (GRSGSGKS) serves as a coordination point for ATP.

It belongs to the ABC transporter superfamily. Lipid exporter (TC 3.A.1.106) family. As to quaternary structure, homodimer.

It is found in the cell inner membrane. It carries out the reaction ATP + H2O + lipid A-core oligosaccharideSide 1 = ADP + phosphate + lipid A-core oligosaccharideSide 2.. In terms of biological role, involved in lipopolysaccharide (LPS) biosynthesis. Translocates lipid A-core from the inner to the outer leaflet of the inner membrane. Transmembrane domains (TMD) form a pore in the inner membrane and the ATP-binding domain (NBD) is responsible for energy generation. The chain is ATP-dependent lipid A-core flippase from Shewanella frigidimarina (strain NCIMB 400).